The sequence spans 303 residues: Ribose-5-phosphate isomerase (303 aa).

Residues Ala-22–Asn-33 are compositionally biased toward gly residues. The segment at Ala-22–Lys-75 is disordered. Arg-52 is modified (omega-N-methylarginine). At Ser-99 the chain carries Phosphoserine.

The protein belongs to the ribose 5-phosphate isomerase family. Widely expressed, with highest levels in testis.

It catalyses the reaction aldehydo-D-ribose 5-phosphate = D-ribulose 5-phosphate. The protein operates within carbohydrate degradation; pentose phosphate pathway; D-ribose 5-phosphate from D-ribulose 5-phosphate (non-oxidative stage): step 1/1. This Mus musculus (Mouse) protein is Ribose-5-phosphate isomerase (Rpia).